Here is a 368-residue protein sequence, read N- to C-terminus: Homoserine dehydrogenase (368 aa).

Residues V12, G14, and V15 each coordinate NAD(+). V15 contributes to the NADP(+) binding site. NADPH is bound by residues V15, K59, T95, S96, and K119. NAD(+) is bound at residue T95. T95 serves as a coordination point for NADP(+). K119 serves as a coordination point for NADP(+). Na(+) is bound by residues E146, V149, A151, and L153. NADP(+) is bound by residues G209 and E212. 2 residues coordinate L-homoserine: E212 and D223. Residue K227 is the Proton donor of the active site. G349 provides a ligand contact to NAD(+). Residue G349 participates in NADP(+) binding. G349 lines the NADPH pocket.

This sequence belongs to the homoserine dehydrogenase family. It depends on a metal cation as a cofactor.

It catalyses the reaction L-homoserine + NADP(+) = L-aspartate 4-semialdehyde + NADPH + H(+). The enzyme catalyses L-homoserine + NAD(+) = L-aspartate 4-semialdehyde + NADH + H(+). The protein operates within amino-acid biosynthesis; L-methionine biosynthesis via de novo pathway; L-homoserine from L-aspartate: step 3/3. Its pathway is amino-acid biosynthesis; L-threonine biosynthesis; L-threonine from L-aspartate: step 3/5. In terms of biological role, catalyzes the conversion of L-aspartate-beta-semialdehyde (L-Asa) to L-homoserine (L-Hse), the third step in the biosynthesis of amino acids that derive from aspartate (the aspartate family of amino acids), including methioinine and threonine, the latter of which is a precursor to isoleucine; production of homoserine leads to a branch-point in the pathway as it can either be O-phosphorylated for processing to threonine, or O-acylated for processing to methionine. In Emericella nidulans (strain FGSC A4 / ATCC 38163 / CBS 112.46 / NRRL 194 / M139) (Aspergillus nidulans), this protein is Homoserine dehydrogenase.